The chain runs to 577 residues: Urease subunit alpha (577 aa).

The Urease domain occupies 136 to 577; that stretch reads GAIDCHVHLI…LPMAQRYFLF (442 aa). Ni(2+)-binding residues include His141, His143, and Lys224. N6-carboxylysine is present on Lys224. Position 226 (His226) interacts with substrate. 2 residues coordinate Ni(2+): His253 and His279. Catalysis depends on His327, which acts as the Proton donor. Asp367 provides a ligand contact to Ni(2+).

The protein belongs to the metallo-dependent hydrolases superfamily. Urease alpha subunit family. As to quaternary structure, heterotrimer of UreA (gamma), UreB (beta) and UreC (alpha) subunits. Three heterotrimers associate to form the active enzyme. Ni cation is required as a cofactor. In terms of processing, carboxylation allows a single lysine to coordinate two nickel ions.

The protein localises to the cytoplasm. The catalysed reaction is urea + 2 H2O + H(+) = hydrogencarbonate + 2 NH4(+). The protein operates within nitrogen metabolism; urea degradation; CO(2) and NH(3) from urea (urease route): step 1/1. This chain is Urease subunit alpha, found in Mycobacterium ulcerans (strain Agy99).